Here is a 401-residue protein sequence, read N- to C-terminus: L-methionine gamma-lyase (401 aa).

Residues 59 to 61 and 89 to 90 contribute to the pyridoxal 5'-phosphate site; these read YTR and GI. A substrate-binding site is contributed by tyrosine 114. Residue 210–212 participates in pyridoxal 5'-phosphate binding; it reads SAT. Residue lysine 213 is modified to N6-(pyridoxal phosphate)lysine. Arginine 377 contributes to the substrate binding site.

It belongs to the trans-sulfuration enzymes family. L-methionine gamma-lyase subfamily. In terms of assembly, homotetramer; dimer of active dimers. Pyridoxal 5'-phosphate serves as cofactor.

It carries out the reaction L-methionine + H2O = methanethiol + 2-oxobutanoate + NH4(+). The catalysed reaction is L-homocysteine + H2O = 2-oxobutanoate + hydrogen sulfide + NH4(+) + H(+). Catalyzes the alpha,gamma-elimination of L-methionine to produce methanethiol, 2-oxobutanoate and ammonia; methanethiol (methyl mercaptan) is considered to be one of the main causes of the oral malodor associated with periodontitis and may also play a role in the pathogenicity of T.denticola. Also displays homocysteine desulfhydrase activity, degrading homocysteine to produce hydrogen sulfide, 2-oxobutanoate and ammonia. The sequence is that of L-methionine gamma-lyase from Treponema denticola (strain ATCC 35405 / DSM 14222 / CIP 103919 / JCM 8153 / KCTC 15104).